A 279-amino-acid chain; its full sequence is Prephenate dehydratase (279 aa).

The region spanning 2–178 (KIAYLGPRGS…NSTRFWLLGK (177 aa)) is the Prephenate dehydratase domain. The ACT domain occupies 194-270 (LALTLPDNLP…LGVKVRLLGN (77 aa)).

It carries out the reaction prephenate + H(+) = 3-phenylpyruvate + CO2 + H2O. The protein operates within amino-acid biosynthesis; L-phenylalanine biosynthesis; phenylpyruvate from prephenate: step 1/1. The protein is Prephenate dehydratase (pheA) of Lactococcus lactis subsp. lactis (strain IL1403) (Streptococcus lactis).